The following is a 588-amino-acid chain: UDP-N-acetylmuramate--L-alanine ligase (588 aa).

119–125 (GSHGKST) is a binding site for ATP. Residues 344 to 371 (VPAAAGAAAAPPVRRDPATAAAAATTAP) are compositionally biased toward low complexity. The segment at 344–411 (VPAAAGAAAA…APAAGPDHAA (68 aa)) is disordered. Residues 372–381 (IGPPDSPPPT) are compositionally biased toward pro residues. The segment covering 382–411 (GIALPRAAPPAVDAPVAATPAPAAGPDHAA) has biased composition (low complexity).

The protein belongs to the MurCDEF family.

The protein resides in the cytoplasm. The enzyme catalyses UDP-N-acetyl-alpha-D-muramate + L-alanine + ATP = UDP-N-acetyl-alpha-D-muramoyl-L-alanine + ADP + phosphate + H(+). The protein operates within cell wall biogenesis; peptidoglycan biosynthesis. In terms of biological role, cell wall formation. In Frankia alni (strain DSM 45986 / CECT 9034 / ACN14a), this protein is UDP-N-acetylmuramate--L-alanine ligase.